A 228-amino-acid polypeptide reads, in one-letter code: MRIVAPVMPRHFDEAQAIDISKYEDVNLIEWRADFLPKDEIVAVAPAIFEKFAGKEIIFTLRTVQEGGNITLSSQEYVDIIKEINAIYNPDYIDFEYFTHKSVFQEMLDFPNLILSYHNFEETPENLMEAFSEMTKLAPRVVKIAVMPQSEQDVLDLMNYTRGFKTLNPEQEFATISMGKLGRLSRFAGDVIGSSWTYVSLDHVSGPGQVTLNDMKRIIEVLEMDISN.

Residues 30-32 (EWR) and Arg-62 contribute to the 3-dehydroquinate site. Residue His-118 is the Proton donor/acceptor of the active site. The active-site Schiff-base intermediate with substrate is Lys-143. The 3-dehydroquinate site is built by Arg-186, Ser-205, and Gln-209.

The protein belongs to the type-I 3-dehydroquinase family. As to quaternary structure, homodimer.

It catalyses the reaction 3-dehydroquinate = 3-dehydroshikimate + H2O. Its pathway is metabolic intermediate biosynthesis; chorismate biosynthesis; chorismate from D-erythrose 4-phosphate and phosphoenolpyruvate: step 3/7. Involved in the third step of the chorismate pathway, which leads to the biosynthesis of aromatic amino acids. Catalyzes the cis-dehydration of 3-dehydroquinate (DHQ) and introduces the first double bond of the aromatic ring to yield 3-dehydroshikimate. This is 3-dehydroquinate dehydratase from Streptococcus pyogenes serotype M12 (strain MGAS9429).